The primary structure comprises 163 residues: Transcriptional repressor NrdR (163 aa).

A zinc finger lies at 3–34 (CVQCGHLEDKVIDSRMSKDGTTIRRRRVCLRC). In terms of domain architecture, ATP-cone spans 49-139 (LRVVKRDNLR…VYRQFSNVEE (91 aa)).

This sequence belongs to the NrdR family. Requires Zn(2+) as cofactor.

In terms of biological role, negatively regulates transcription of bacterial ribonucleotide reductase nrd genes and operons by binding to NrdR-boxes. In Akkermansia muciniphila (strain ATCC BAA-835 / DSM 22959 / JCM 33894 / BCRC 81048 / CCUG 64013 / CIP 107961 / Muc), this protein is Transcriptional repressor NrdR.